Consider the following 877-residue polypeptide: Phosphoenolpyruvate carboxylase (877 aa).

Active-site residues include histidine 137 and lysine 542.

This sequence belongs to the PEPCase type 1 family. Mg(2+) serves as cofactor.

The enzyme catalyses oxaloacetate + phosphate = phosphoenolpyruvate + hydrogencarbonate. Functionally, forms oxaloacetate, a four-carbon dicarboxylic acid source for the tricarboxylic acid cycle. This chain is Phosphoenolpyruvate carboxylase, found in Tolumonas auensis (strain DSM 9187 / NBRC 110442 / TA 4).